A 340-amino-acid chain; its full sequence is Entry-fusion complex protein OPG094 (340 aa).

Positions 1–20 (MGGGVSVELPKRDPPPGVPT) are disordered. Glycine 2 carries the N-myristoyl glycine; by host lipid modification. Residues 2–319 (GGGVSVELPK…VQHNIKHSFD (318 aa)) lie on the Virion surface side of the membrane. The helical; Signal-anchor for type II membrane protein transmembrane segment at 320–340 (LKLHLISLLSLLVIWILIVAI) threads the bilayer.

This sequence belongs to the orthopoxvirus OPG086 family. As to quaternary structure, interacts with OPG143. Component of the entry fusion complex (EFC) composed of OPG053, OPG076, OPG086, OPG094, OPG095, OPG099, OPG107, OPG143, OPG104, OPG147 and OPG155. Except for OPG095 and OPG053, each of the EFC proteins is required for assembly or stability of the complex. Post-translationally, unglycosylated because produced in viral factories instead of the classic ER -Golgi route.

It is found in the virion membrane. Its function is as follows. Component of the entry fusion complex (EFC), which consists of 11 proteins. During cell infection, this complex mediates entry of the virion core into the host cytoplasm by a two-step mechanism consisting of lipid mixing of the viral and cellular membranes and subsequent pore formation. This is Entry-fusion complex protein OPG094 (OPG094) from Vaccinia virus (strain Copenhagen) (VACV).